A 306-amino-acid chain; its full sequence is Elongation factor Ts (306 aa).

Residues 80 to 83 (TDFV) form an involved in Mg(2+) ion dislocation from EF-Tu region.

This sequence belongs to the EF-Ts family.

The protein localises to the cytoplasm. Associates with the EF-Tu.GDP complex and induces the exchange of GDP to GTP. It remains bound to the aminoacyl-tRNA.EF-Tu.GTP complex up to the GTP hydrolysis stage on the ribosome. This is Elongation factor Ts from Methylorubrum populi (strain ATCC BAA-705 / NCIMB 13946 / BJ001) (Methylobacterium populi).